Consider the following 229-residue polypeptide: 7-cyano-7-deazaguanine synthase (229 aa).

9–19 (LSGGLDSATVL) is a binding site for ATP. 4 residues coordinate Zn(2+): Cys-188, Cys-198, Cys-201, and Cys-204.

It belongs to the QueC family. It depends on Zn(2+) as a cofactor.

The enzyme catalyses 7-carboxy-7-deazaguanine + NH4(+) + ATP = 7-cyano-7-deazaguanine + ADP + phosphate + H2O + H(+). Its pathway is purine metabolism; 7-cyano-7-deazaguanine biosynthesis. Functionally, catalyzes the ATP-dependent conversion of 7-carboxy-7-deazaguanine (CDG) to 7-cyano-7-deazaguanine (preQ(0)). The sequence is that of 7-cyano-7-deazaguanine synthase from Methylobacillus flagellatus (strain ATCC 51484 / DSM 6875 / VKM B-1610 / KT).